Here is a 185-residue protein sequence, read N- to C-terminus: Large ribosomal subunit protein uL22 (185 aa).

Belongs to the universal ribosomal protein uL22 family. As to quaternary structure, component of the large ribosomal subunit. Mature ribosomes consist of a small (40S) and a large (60S) subunit. The 40S subunit contains about 32 different proteins and 1 molecule of RNA (18S). The 60S subunit contains 45 different proteins and 3 molecules of RNA (25S, 5.8S and 5S).

Its subcellular location is the cytoplasm. Component of the ribosome, a large ribonucleoprotein complex responsible for the synthesis of proteins in the cell. The small ribosomal subunit (SSU) binds messenger RNAs (mRNAs) and translates the encoded message by selecting cognate aminoacyl-transfer RNA (tRNA) molecules. The large subunit (LSU) contains the ribosomal catalytic site termed the peptidyl transferase center (PTC), which catalyzes the formation of peptide bonds, thereby polymerizing the amino acids delivered by tRNAs into a polypeptide chain. The nascent polypeptides leave the ribosome through a tunnel in the LSU and interact with protein factors that function in enzymatic processing, targeting, and the membrane insertion of nascent chains at the exit of the ribosomal tunnel. This is Large ribosomal subunit protein uL22 from Candida albicans (strain SC5314 / ATCC MYA-2876) (Yeast).